We begin with the raw amino-acid sequence, 159 residues long: Protein-export protein SecB (159 aa).

It belongs to the SecB family. Homotetramer, a dimer of dimers. One homotetramer interacts with 1 SecA dimer.

It localises to the cytoplasm. In terms of biological role, one of the proteins required for the normal export of preproteins out of the cell cytoplasm. It is a molecular chaperone that binds to a subset of precursor proteins, maintaining them in a translocation-competent state. It also specifically binds to its receptor SecA. The chain is Protein-export protein SecB from Burkholderia vietnamiensis (strain G4 / LMG 22486) (Burkholderia cepacia (strain R1808)).